The sequence spans 97 residues: Large ribosomal subunit protein bL27 (97 aa).

The interval 1–23 (MAHKKGASSSRNGRDSTSKRLGV) is disordered.

This sequence belongs to the bacterial ribosomal protein bL27 family.

The polypeptide is Large ribosomal subunit protein bL27 (Acidothermus cellulolyticus (strain ATCC 43068 / DSM 8971 / 11B)).